A 244-amino-acid polypeptide reads, in one-letter code: Agamous-like MADS-box protein AGL13 (244 aa).

Residues 3–57 enclose the MADS-box domain; it reads RGKVEVKRIENKITRQVTFSKRKSGLLKKAYELSVLCDAEVSLIIFSTGGKLYEF. A K-box domain is found at 85-175; it reads TQGLRQEVTK…KLETEDHDFK (91 aa).

It localises to the nucleus. Its function is as follows. Probable transcription factor. The protein is Agamous-like MADS-box protein AGL13 (AGL13) of Arabidopsis thaliana (Mouse-ear cress).